We begin with the raw amino-acid sequence, 141 residues long: Putative nickel-responsive regulator (141 aa).

His83, His94, His96, and Cys102 together coordinate Ni(2+).

This sequence belongs to the transcriptional regulatory CopG/NikR family. Ni(2+) is required as a cofactor.

Its function is as follows. Transcriptional regulator. In Methanopyrus kandleri (strain AV19 / DSM 6324 / JCM 9639 / NBRC 100938), this protein is Putative nickel-responsive regulator.